The primary structure comprises 156 residues: Ribosome maturation factor RimP (156 aa).

This sequence belongs to the RimP family.

It is found in the cytoplasm. Required for maturation of 30S ribosomal subunits. The chain is Ribosome maturation factor RimP from Bacillus mycoides (strain KBAB4) (Bacillus weihenstephanensis).